A 449-amino-acid polypeptide reads, in one-letter code: C4-dicarboxylate transport protein (449 aa).

8 helical membrane passes run 18–38 (PFYL…ALLG), 61–81 (MIIS…VAHV), 93–113 (VYFL…AHVV), 159–179 (FVGD…IALA), 202–222 (LVQM…AFTI), 244–264 (SLLF…FSIL), 346–366 (LFLV…AGFI), and 369–389 (AATL…ILGV).

Belongs to the dicarboxylate/amino acid:cation symporter (DAACS) (TC 2.A.23) family.

The protein resides in the cell inner membrane. In terms of biological role, responsible for the transport of dicarboxylates such as succinate, fumarate, and malate from the periplasm across the membrane. In Xylella fastidiosa (strain M23), this protein is C4-dicarboxylate transport protein.